The primary structure comprises 286 residues: MAGAKEIKTKIASVKNTQKITSAMEMVAASKMRRAQERMAASRPYAESMRKVIGHVAQGSLEYKHPYLEVREAKRVGYIVVATDRGLCGGLNVNLFKKVVSDVKSWKEQGAEFEFCPIGARSVQFFKSFGGQVSAHASGLGDAPKLADLIGTVRVMLDAYNEGKLDRLYVVFNKFVNTMTQTPVIEQLLPLPKSEDDEVAHRWDYIYEPDPKALLDTLLVRYVESQVYQGVVENIASEQAARMVAMKAATDNAGTLIDDLQLVYNKARQAAITQELSEIVSGASAV.

The protein belongs to the ATPase gamma chain family. In terms of assembly, F-type ATPases have 2 components, CF(1) - the catalytic core - and CF(0) - the membrane proton channel. CF(1) has five subunits: alpha(3), beta(3), gamma(1), delta(1), epsilon(1). CF(0) has three main subunits: a, b and c.

Its subcellular location is the cell inner membrane. Produces ATP from ADP in the presence of a proton gradient across the membrane. The gamma chain is believed to be important in regulating ATPase activity and the flow of protons through the CF(0) complex. This is ATP synthase gamma chain from Shewanella sp. (strain ANA-3).